Consider the following 435-residue polypeptide: Enolase (435 aa).

Gln-163 lines the (2R)-2-phosphoglycerate pocket. Glu-205 acts as the Proton donor in catalysis. Residues Asp-243, Glu-292, and Asp-319 each contribute to the Mg(2+) site. 4 residues coordinate (2R)-2-phosphoglycerate: Lys-344, Arg-373, Ser-374, and Lys-395. Lys-344 serves as the catalytic Proton acceptor.

The protein belongs to the enolase family. Mg(2+) is required as a cofactor.

Its subcellular location is the cytoplasm. It localises to the secreted. The protein localises to the cell surface. The catalysed reaction is (2R)-2-phosphoglycerate = phosphoenolpyruvate + H2O. It functions in the pathway carbohydrate degradation; glycolysis; pyruvate from D-glyceraldehyde 3-phosphate: step 4/5. Its function is as follows. Catalyzes the reversible conversion of 2-phosphoglycerate (2-PG) into phosphoenolpyruvate (PEP). It is essential for the degradation of carbohydrates via glycolysis. This Streptococcus uberis (strain ATCC BAA-854 / 0140J) protein is Enolase.